The chain runs to 369 residues: Putative agmatine deiminase (369 aa).

The active-site Amidino-cysteine intermediate is Cys355.

This sequence belongs to the agmatine deiminase family.

The enzyme catalyses agmatine + H2O = N-carbamoylputrescine + NH4(+). This Marinomonas sp. (strain MWYL1) protein is Putative agmatine deiminase.